The chain runs to 447 residues: MESGPCSRPAEPRHCVSGRAGAGLAFPAFPLSAAGAEPGSRIGTVAAVLPAGGCGERMGVRTPKQFCRVLERPLISYTLQAMERVCWIKDIVVTVTGENMEAMRSIIQRYGHKRISLAEAGATRHRSIFNGLKALAEDQPGCELTRPEVVIIHDAVRPFVEEDILLRVVLAAKEHGAAGAIRPLVSTVVSPSADGHLDHSLDRAKHRASEMPQAFHFDVIYEAYQKCSDFDLEFGTECLQLALKYCHRKAKLVEGTPDLWKVTYKQDLCAAEAMIKEKISQEICVVVNTKDEESVGHLLEEVLRNELNCIKVTSTVLDRTSGDIENFIDQCYSFICVNVVSSESRETRKLLSILEESSLPLLYPVVVVLVHCFDFTVVPLAQKMENLVWIRELAKEAKGRNVLLSGVLLNHSQDEQKLQESLVQSAAIIAALVKERNSALVGQLLVA.

Belongs to the IspD/TarI cytidylyltransferase family. IspD subfamily. In terms of assembly, homodimer.

It localises to the cytoplasm. The protein resides in the cytosol. It catalyses the reaction D-ribitol 5-phosphate + CTP + H(+) = CDP-L-ribitol + diphosphate. It carries out the reaction D-ribose 5-phosphate + CTP + H(+) = CDP-D-ribose + diphosphate. The enzyme catalyses D-ribulose 5-phosphate + CTP + H(+) = CDP-D-ribulose + diphosphate. It participates in protein modification; protein glycosylation. In terms of biological role, cytidylyltransferase required for protein O-linked mannosylation. Catalyzes the formation of CDP-ribitol nucleotide sugar from D-ribitol 5-phosphate. CDP-ribitol is a substrate of FKTN during the biosynthesis of the phosphorylated O-mannosyl trisaccharide (N-acetylgalactosamine-beta-3-N-acetylglucosamine-beta-4-(phosphate-6-)mannose), a carbohydrate structure present in alpha-dystroglycan (DAG1), which is required for binding laminin G-like domain-containing extracellular proteins with high affinity. Shows activity toward other pentose phosphate sugars and mediates formation of CDP-ribulose or CDP-ribose using CTP and ribulose-5-phosphate or ribose-5-phosphate, respectively. Not involved in dolichol production. The protein is D-ribitol-5-phosphate cytidylyltransferase (Crppa) of Rattus norvegicus (Rat).